A 397-amino-acid polypeptide reads, in one-letter code: Acetate kinase 1 (397 aa).

Position 8 (Asn8) interacts with Mg(2+). Residue Lys15 coordinates ATP. Residue Arg89 participates in substrate binding. Catalysis depends on Asp146, which acts as the Proton donor/acceptor. Residues 206–210, 281–283, and 329–333 contribute to the ATP site; these read HLGNG, DLR, and GIGEN. Glu382 serves as a coordination point for Mg(2+).

It belongs to the acetokinase family. In terms of assembly, homodimer. Mg(2+) serves as cofactor. Requires Mn(2+) as cofactor.

Its subcellular location is the cytoplasm. It carries out the reaction acetate + ATP = acetyl phosphate + ADP. The protein operates within metabolic intermediate biosynthesis; acetyl-CoA biosynthesis; acetyl-CoA from acetate: step 1/2. Functionally, catalyzes the formation of acetyl phosphate from acetate and ATP. Can also catalyze the reverse reaction. This Listeria innocua serovar 6a (strain ATCC BAA-680 / CLIP 11262) protein is Acetate kinase 1.